Reading from the N-terminus, the 35-residue chain is QWPFQQWAPCTGHWDCPGDRCCFAGYCLETTPSCD.

Cystine bridges form between Cys-10-Cys-22, Cys-16-Cys-27, and Cys-21-Cys-34.

As to expression, expressed by the venom duct.

It localises to the secreted. This Californiconus californicus (California cone) protein is Conotoxin Cl6.16.